The following is a 155-amino-acid chain: Probable ribosome biogenesis protein RLP24 (155 aa).

Belongs to the eukaryotic ribosomal protein eL24 family.

This Encephalitozoon cuniculi (strain GB-M1) (Microsporidian parasite) protein is Probable ribosome biogenesis protein RLP24 (RPL24).